Consider the following 330-residue polypeptide: DNA-directed RNA polymerase subunit alpha (330 aa).

The alpha N-terminal domain (alpha-NTD) stretch occupies residues 1–225; the sequence is MSDLAIPTIS…KQFAALVSHN (225 aa). The interval 237–330 is alpha C-terminal domain (alpha-CTD); it reads VKYAIPEEKY…KKKNKGMDEA (94 aa).

Belongs to the RNA polymerase alpha chain family. As to quaternary structure, homodimer. The RNAP catalytic core consists of 2 alpha, 1 beta, 1 beta' and 1 omega subunit. When a sigma factor is associated with the core the holoenzyme is formed, which can initiate transcription.

The enzyme catalyses RNA(n) + a ribonucleoside 5'-triphosphate = RNA(n+1) + diphosphate. In terms of biological role, DNA-dependent RNA polymerase catalyzes the transcription of DNA into RNA using the four ribonucleoside triphosphates as substrates. This is DNA-directed RNA polymerase subunit alpha from Dehalococcoides mccartyi (strain ATCC BAA-2266 / KCTC 15142 / 195) (Dehalococcoides ethenogenes (strain 195)).